Reading from the N-terminus, the 342-residue chain is tRNA N6-adenosine threonylcarbamoyltransferase (342 aa).

Positions 111 and 115 each coordinate Fe cation. Substrate contacts are provided by residues 134-138, aspartate 167, glycine 180, and asparagine 272; that span reads LVSGG. Aspartate 300 lines the Fe cation pocket.

The protein belongs to the KAE1 / TsaD family. Fe(2+) is required as a cofactor.

The protein resides in the cytoplasm. The enzyme catalyses L-threonylcarbamoyladenylate + adenosine(37) in tRNA = N(6)-L-threonylcarbamoyladenosine(37) in tRNA + AMP + H(+). Functionally, required for the formation of a threonylcarbamoyl group on adenosine at position 37 (t(6)A37) in tRNAs that read codons beginning with adenine. Is involved in the transfer of the threonylcarbamoyl moiety of threonylcarbamoyl-AMP (TC-AMP) to the N6 group of A37, together with TsaE and TsaB. TsaD likely plays a direct catalytic role in this reaction. This Aromatoleum aromaticum (strain DSM 19018 / LMG 30748 / EbN1) (Azoarcus sp. (strain EbN1)) protein is tRNA N6-adenosine threonylcarbamoyltransferase.